A 432-amino-acid polypeptide reads, in one-letter code: Anaerobic glycerol-3-phosphate dehydrogenase subunit B (432 aa).

This sequence belongs to the anaerobic G-3-P dehydrogenase subunit B family. Composed of a catalytic GlpA/B dimer and of membrane bound GlpC. Requires FMN as cofactor.

The enzyme catalyses a quinone + sn-glycerol 3-phosphate = dihydroxyacetone phosphate + a quinol. Its pathway is polyol metabolism; glycerol degradation via glycerol kinase pathway; glycerone phosphate from sn-glycerol 3-phosphate (anaerobic route): step 1/1. Conversion of glycerol 3-phosphate to dihydroxyacetone. Uses fumarate or nitrate as electron acceptor. The chain is Anaerobic glycerol-3-phosphate dehydrogenase subunit B (glpB) from Haemophilus influenzae (strain ATCC 51907 / DSM 11121 / KW20 / Rd).